The sequence spans 213 residues: MELHVLNHPLVEHKLTVLRDKNTPSSTFRELVSELVMLEAYEATRNLSVVAAPIETPVAPMTGKKLASPRPIIVPVLRAGLGMLDGMTRLIPTAEVGFLGMKRDEEHPTQQVTYANRLPEDLSGRQCFLIDPMLATGGTLVAATHYLAERGAKDVTAINIIAAPEGIKYVEEHIDPSIDFKVVVCAVDERLNDKCYIVPGLGDAGDRLYGVID.

5-phospho-alpha-D-ribose 1-diphosphate contacts are provided by residues arginine 78, arginine 103, and aspartate 131–threonine 139. Residues isoleucine 197 and glycine 202–alanine 204 each bind uracil. Aspartate 203 is a 5-phospho-alpha-D-ribose 1-diphosphate binding site.

The protein belongs to the UPRTase family. The cofactor is Mg(2+).

It carries out the reaction UMP + diphosphate = 5-phospho-alpha-D-ribose 1-diphosphate + uracil. It participates in pyrimidine metabolism; UMP biosynthesis via salvage pathway; UMP from uracil: step 1/1. Allosterically activated by GTP. Its function is as follows. Catalyzes the conversion of uracil and 5-phospho-alpha-D-ribose 1-diphosphate (PRPP) to UMP and diphosphate. The protein is Uracil phosphoribosyltransferase of Bifidobacterium longum (strain DJO10A).